A 1217-amino-acid polypeptide reads, in one-letter code: Splicing factor 3B subunit 3 (1217 aa).

Interaction with PHF5A, SF3B1 and SF3B5 regions lie at residues 105–119 and 145–168; these read ETFGKSGCRRIVPGQ and NRDAAARLTISSPLEAHKANTLVY. A Phosphoserine modification is found at serine 156. Interaction with SF3B1 and SF3B5 regions lie at residues 193–231 and 786–804; these read DNDPTGEAAANTQQTLTFYELDLGLNHVVRKYSEPLEEH and RKFVIHPESNNLIIIETDH. The tract at residues 1028–1049 is interaction with SF3B1; sequence TYPRWVTTASLLDYDTVAGADK. The tract at residues 1100 to 1123 is interaction with SF3B5; sequence TVLSLQKTTLIPGGSESLVYTTLS. Threonine 1200 carries the phosphothreonine modification.

The protein belongs to the RSE1 family. In terms of assembly, component of the 17S U2 SnRNP complex, a ribonucleoprotein complex that contains small nuclear RNA (snRNA) U2 and a number of specific proteins. Part of the SF3B subcomplex of the 17S U2 SnRNP complex. SF3B associates with the splicing subcomplex SF3A and a 12S RNA unit to form the U2 small nuclear ribonucleoproteins complex (U2 snRNP). Within the SF3B subcomplex, interacts directly with SF3B1 (via HEAT domain), SF3B5 and PHF5A. Identified in the spliceosome A complex; remains associated with the spliceosome throughout the splicing process. Component of the spliceosome B complex. Identified in the spliceosome C complex. Identified in the spliceosome E complex. Component of the minor (U12-type spliceosome) spliceosome. Within this complex, interacts with SCNM1. Associates with the STAGA transcription coactivator-HAT complex. Interacts with SUPT3H. Interacts with TAF3.

Its subcellular location is the nucleus. Component of the 17S U2 SnRNP complex of the spliceosome, a large ribonucleoprotein complex that removes introns from transcribed pre-mRNAs. The 17S U2 SnRNP complex (1) directly participates in early spliceosome assembly and (2) mediates recognition of the intron branch site during pre-mRNA splicing by promoting the selection of the pre-mRNA branch-site adenosine, the nucleophile for the first step of splicing. Within the 17S U2 SnRNP complex, SF3B3 is part of the SF3B subcomplex, which is required for 'A' complex assembly formed by the stable binding of U2 snRNP to the branchpoint sequence in pre-mRNA. Sequence independent binding of SF3A and SF3B subcomplexes upstream of the branch site is essential, it may anchor U2 snRNP to the pre-mRNA. May also be involved in the assembly of the 'E' complex. Also acts as a component of the minor spliceosome, which is involved in the splicing of U12-type introns in pre-mRNAs. The polypeptide is Splicing factor 3B subunit 3 (SF3B3) (Bos taurus (Bovine)).